Consider the following 322-residue polypeptide: Homoserine kinase (322 aa).

It belongs to the pseudomonas-type ThrB family.

It carries out the reaction L-homoserine + ATP = O-phospho-L-homoserine + ADP + H(+). It participates in amino-acid biosynthesis; L-threonine biosynthesis; L-threonine from L-aspartate: step 4/5. This chain is Homoserine kinase, found in Agrobacterium fabrum (strain C58 / ATCC 33970) (Agrobacterium tumefaciens (strain C58)).